A 1557-amino-acid chain; its full sequence is DVA-1 polyprotein (1557 aa).

An N-terminal signal peptide occupies residues 1-21 (MKSTSFITLLLLSYFIVEAHS). Positions 22 to 60 (SIFHWDDERLFKHDDTHSWLTDVQKAELETLKHQPIQLR) are excised as a propeptide. Residue N997 is glycosylated (N-linked (GlcNAc...) asparagine).

The protein belongs to the NPA family. Nematode polyprotein allergens (NPAs) are synthesized as large polypeptides that are subsequently proteolytically cleaved to active polypeptide units.

Functionally, has high binding affinity for fatty acids and retinoids. The polypeptide is DVA-1 polyprotein (DVA-1) (Dictyocaulus viviparus (Bovine lungworm)).